Reading from the N-terminus, the 716-residue chain is Translation initiation factor IF-2 (716 aa).

The interval 52–135 is disordered; the sequence is QQESNNNTKQ…PAAEPKEMPS (84 aa). A compositionally biased stretch (low complexity) spans 56–125; that stretch reads NNNTKQNTQN…KNNKGNKNNK (70 aa). The tr-type G domain maps to 218-387; it reads ERPAVVTIMG…GLVAEVQELK (170 aa). The segment at 227–234 is G1; that stretch reads GHVDHGKT. Position 227–234 (227–234) interacts with GTP; sequence GHVDHGKT. The G2 stretch occupies residues 252-256; sequence GITQH. Residues 273-276 are G3; the sequence is DTPG. GTP-binding positions include 273 to 277 and 327 to 330; these read DTPGH and NKID. The interval 327–330 is G4; sequence NKID. The G5 stretch occupies residues 363–365; that stretch reads SAL.

The protein belongs to the TRAFAC class translation factor GTPase superfamily. Classic translation factor GTPase family. IF-2 subfamily.

Its subcellular location is the cytoplasm. Its function is as follows. One of the essential components for the initiation of protein synthesis. Protects formylmethionyl-tRNA from spontaneous hydrolysis and promotes its binding to the 30S ribosomal subunits. Also involved in the hydrolysis of GTP during the formation of the 70S ribosomal complex. The polypeptide is Translation initiation factor IF-2 (Staphylococcus haemolyticus (strain JCSC1435)).